We begin with the raw amino-acid sequence, 204 residues long: MSREQLSVEIIEAGRFLYGRGWSPATSSNYSARLSATEALLTVSGKHKGQLGPDDVLATDMAGNSLEPGKKPSAETLLHTQLYSSRPQVGAVLHTHSVNATVLSRLTAADHLVFEDYELQKAFHGVVTHQSQVVVPIFDNDQDIARLAAKVQPWLDAHPECAGYLIRGHGLYTWGAKMSDALRQIEAFEFLFECELKMRAVLNR.

Zn(2+) is bound by residues histidine 94 and histidine 96.

This sequence belongs to the aldolase class II family. MtnB subfamily. The cofactor is Zn(2+).

The enzyme catalyses 5-(methylsulfanyl)-D-ribulose 1-phosphate = 5-methylsulfanyl-2,3-dioxopentyl phosphate + H2O. It participates in amino-acid biosynthesis; L-methionine biosynthesis via salvage pathway; L-methionine from S-methyl-5-thio-alpha-D-ribose 1-phosphate: step 2/6. Its function is as follows. Catalyzes the dehydration of methylthioribulose-1-phosphate (MTRu-1-P) into 2,3-diketo-5-methylthiopentyl-1-phosphate (DK-MTP-1-P). The chain is Methylthioribulose-1-phosphate dehydratase from Pseudomonas savastanoi pv. phaseolicola (strain 1448A / Race 6) (Pseudomonas syringae pv. phaseolicola (strain 1448A / Race 6)).